Here is a 387-residue protein sequence, read N- to C-terminus: S-adenosylmethionine synthase (387 aa).

Residue H19 participates in ATP binding. D21 lines the Mg(2+) pocket. E47 contacts K(+). Residue Q103 coordinates L-methionine. The segment at 103–113 (QSPDIAQGVEL) is flexible loop. Residues 167–169 (DMK), 233–234 (RF), D242, 248–249 (RK), A265, and K269 each bind ATP. L-methionine is bound at residue D242. K273 provides a ligand contact to L-methionine.

Belongs to the AdoMet synthase family. Homotetramer; dimer of dimers. It depends on Mg(2+) as a cofactor. Requires K(+) as cofactor.

Its subcellular location is the cytoplasm. The catalysed reaction is L-methionine + ATP + H2O = S-adenosyl-L-methionine + phosphate + diphosphate. It participates in amino-acid biosynthesis; S-adenosyl-L-methionine biosynthesis; S-adenosyl-L-methionine from L-methionine: step 1/1. Its function is as follows. Catalyzes the formation of S-adenosylmethionine (AdoMet) from methionine and ATP. The overall synthetic reaction is composed of two sequential steps, AdoMet formation and the subsequent tripolyphosphate hydrolysis which occurs prior to release of AdoMet from the enzyme. This Mycoplasma capricolum subsp. capricolum (strain California kid / ATCC 27343 / NCTC 10154) protein is S-adenosylmethionine synthase.